The sequence spans 245 residues: DNA polymerase sliding clamp (245 aa).

It belongs to the PCNA family. Homotrimer. The subunits circularize to form a toroid; DNA passes through its center. Replication factor C (RFC) is required to load the toroid on the DNA.

Sliding clamp subunit that acts as a moving platform for DNA processing. Responsible for tethering the catalytic subunit of DNA polymerase and other proteins to DNA during high-speed replication. This Methanosarcina mazei (strain ATCC BAA-159 / DSM 3647 / Goe1 / Go1 / JCM 11833 / OCM 88) (Methanosarcina frisia) protein is DNA polymerase sliding clamp.